The sequence spans 166 residues: MRLILLSGLLLLGTFLANGDETDPDGQVLNSLIETLMHLQREFANLKYAFLTVHKARSFGSGSERLYVSNKEIKNFEPLGDICSQAGGHIPSPQLENQNKAFANVLERHNKAAYLVVGDSANFTNWAAGQPNEADGTCVKADTHGSWHSASCDDNLLVVCEFYFIL.

The first 19 residues, 1–19, serve as a signal peptide directing secretion; sequence MRLILLSGLLLLGTFLANG. In terms of domain architecture, C-type lectin spans 46 to 161; sequence LKYAFLTVHK…CDDNLLVVCE (116 aa). Intrachain disulfides connect C83-C160 and C138-C152. N122 carries an N-linked (GlcNAc...) asparagine glycan.

The protein belongs to the alpha-type phospholipase A2 inhibitor family. As to quaternary structure, oligomer. Homotrimer; non-covalently linked. Glycosylated. The glycosylation has no role in the association of this PLI and PA2 enzyme. As to expression, expressed by the liver.

Its subcellular location is the secreted. Its function is as follows. This phospholipase A2 inhibitor binds directly phospholipase A2 in the presence or absence of calcium. Has anti-enzymatic, anti-myotoxic, anti-edema inducing, anti-cytotoxic, anti-bactericidal, and anti-lethal properties against basic and acidic phospholipases A2 from Bothrops venoms. This chain is Phospholipase A2 myotoxin inhibitor protein, found in Bothrops moojeni (Lance-headed viper).